The chain runs to 345 residues: N-acetyl-gamma-glutamyl-phosphate reductase (345 aa).

The active site involves Cys-151.

It belongs to the NAGSA dehydrogenase family. Type 1 subfamily.

It is found in the cytoplasm. The enzyme catalyses N-acetyl-L-glutamate 5-semialdehyde + phosphate + NADP(+) = N-acetyl-L-glutamyl 5-phosphate + NADPH + H(+). It functions in the pathway amino-acid biosynthesis; L-arginine biosynthesis; N(2)-acetyl-L-ornithine from L-glutamate: step 3/4. Its function is as follows. Catalyzes the NADPH-dependent reduction of N-acetyl-5-glutamyl phosphate to yield N-acetyl-L-glutamate 5-semialdehyde. This is N-acetyl-gamma-glutamyl-phosphate reductase from Clostridium novyi (strain NT).